We begin with the raw amino-acid sequence, 569 residues long: Protein THEMIS3 (569 aa).

2 CABIT regions span residues 1–254 (MEQT…ARLD) and 255–523 (RKPR…EERS).

The protein belongs to the themis family. In terms of tissue distribution, specifically expressed in the intestine.

This chain is Protein THEMIS3 (Themis3), found in Mus musculus (Mouse).